The sequence spans 183 residues: MAMYTSESERDWRRVIHDSHGLWCDCGDWREHLYCVYDSHFQRRPTTRAERRAANWRRQMRRLHRLWCFCQDWKCHALYAEWDGKESDDESSASSSGEAPEQQVPAWKTVRAFSRAYHHRINRGLRGTPPPRNLPGYEHASEGWRFCSRRERREDDLRTRAEPDRVVFQLGGVPPRRHRETYV.

The protein belongs to the herpesviridae US1 family.

This is an uncharacterized protein from Human cytomegalovirus (strain AD169) (HHV-5).